Consider the following 438-residue polypeptide: Methylenetetrahydrofolate--tRNA-(uracil-5-)-methyltransferase TrmFO (438 aa).

Residue 10–15 (GGGLAG) coordinates FAD.

The protein belongs to the MnmG family. TrmFO subfamily. FAD serves as cofactor.

It is found in the cytoplasm. It catalyses the reaction uridine(54) in tRNA + (6R)-5,10-methylene-5,6,7,8-tetrahydrofolate + NADH + H(+) = 5-methyluridine(54) in tRNA + (6S)-5,6,7,8-tetrahydrofolate + NAD(+). It carries out the reaction uridine(54) in tRNA + (6R)-5,10-methylene-5,6,7,8-tetrahydrofolate + NADPH + H(+) = 5-methyluridine(54) in tRNA + (6S)-5,6,7,8-tetrahydrofolate + NADP(+). Catalyzes the folate-dependent formation of 5-methyl-uridine at position 54 (M-5-U54) in all tRNAs. This Trichormus variabilis (strain ATCC 29413 / PCC 7937) (Anabaena variabilis) protein is Methylenetetrahydrofolate--tRNA-(uracil-5-)-methyltransferase TrmFO.